The chain runs to 201 residues: Potassium-transporting ATPase KdpC subunit (201 aa).

Residues 10 to 30 (VLLVALTAVTGLAYPLAVTGI) form a helical membrane-spanning segment.

This sequence belongs to the KdpC family. In terms of assembly, the system is composed of three essential subunits: KdpA, KdpB and KdpC.

It is found in the cell inner membrane. In terms of biological role, part of the high-affinity ATP-driven potassium transport (or Kdp) system, which catalyzes the hydrolysis of ATP coupled with the electrogenic transport of potassium into the cytoplasm. This subunit acts as a catalytic chaperone that increases the ATP-binding affinity of the ATP-hydrolyzing subunit KdpB by the formation of a transient KdpB/KdpC/ATP ternary complex. The polypeptide is Potassium-transporting ATPase KdpC subunit (Methylorubrum extorquens (strain PA1) (Methylobacterium extorquens)).